Reading from the N-terminus, the 352-residue chain is Mas-related G-protein coupled receptor member X2 (352 aa).

Residues 1 to 45 (MEERNISGRDLRVDSNITYWGTNITAVNESNHTGMSFCEVVSCTM) are Extracellular-facing. Asn5, Asn16, Asn23, Asn28, and Asn31 each carry an N-linked (GlcNAc...) asparagine glycan. A helical membrane pass occupies residues 46–66 (VFLSLIVALVGLVGNATVLWF). Residues 67–75 (LGFQMRRNA) are Cytoplasmic-facing. Residues 76–96 (FSVYILNLAGADFLFICFQIG) form a helical membrane-spanning segment. The Extracellular portion of the chain corresponds to 97 to 107 (YCFHMILDIDS). Residues 108-128 (IPIEIDLFYLVVLNFPYFCGL) form a helical membrane-spanning segment. Over 129–155 (SILSAISIERCLSVMWPIWYHCQRPRH) the chain is Cytoplasmic. The chain crosses the membrane as a helical span at residues 156 to 176 (TSAVICTLLWVLSLVCSLLEG). Topologically, residues 177–195 (KECGFLYYTSDPGWCKTFD) are extracellular. A helical membrane pass occupies residues 196 to 216 (LITATWLIVLFVALLGSSLAL). The Cytoplasmic segment spans residues 217-239 (VITIFWGLHKIPVTRLYVAIVFT). A helical transmembrane segment spans residues 240-260 (VLVFLLFGLPYGIYWFLLVWI). At 261–275 (EKFYYVLPCSIYPVT) the chain is on the extracellular side. A helical transmembrane segment spans residues 276–296 (VFLSCVNSSAKPIIYCLVGSI). Residues 297–347 (RHHRFQRKTLKLFLQRAMQDTPEEEECGEMGSSGRSREIKTIWKGLRAALI) are Cytoplasmic-facing.

It belongs to the G-protein coupled receptor 1 family. Mas subfamily.

Its subcellular location is the cell membrane. Orphan receptor. Probably involved in the function of nociceptive neurons. May regulate nociceptor function and/or development, including the sensation or modulation of pain. In Mus musculus (Mouse), this protein is Mas-related G-protein coupled receptor member X2 (Mrgprx2).